Here is a 202-residue protein sequence, read N- to C-terminus: UDP-N-acetylglucosamine transferase subunit ALG13 (202 aa).

Belongs to the glycosyltransferase 28 family. As to quaternary structure, heterodimer with ALG14 to form a functional enzyme.

It is found in the endoplasmic reticulum. It catalyses the reaction an N-acetyl-alpha-D-glucosaminyl-diphospho-di-trans,poly-cis-dolichol + UDP-N-acetyl-alpha-D-glucosamine = an N,N'-diacetylchitobiosyl-diphospho-di-trans,poly-cis-dolichol + UDP + H(+). Functionally, involved in protein N-glycosylation. Essential for the second step of the dolichol-linked oligosaccharide pathway. This is UDP-N-acetylglucosamine transferase subunit ALG13 (ALG13) from Saccharomyces cerevisiae (strain ATCC 204508 / S288c) (Baker's yeast).